A 247-amino-acid polypeptide reads, in one-letter code: Osmotin-like protein OSML81 (247 aa).

Positions 1–21 (MGYLRSSFIFSLLAFVTYTYA) are cleaved as a signal peptide. 8 cysteine pairs are disulfide-bonded: Cys-30/Cys-225, Cys-72/Cys-82, Cys-87/Cys-93, Cys-141/Cys-213, Cys-146/Cys-196, Cys-154/Cys-164, Cys-168/Cys-177, and Cys-178/Cys-183.

Belongs to the thaumatin family.

This Solanum commersonii (Commerson's wild potato) protein is Osmotin-like protein OSML81.